Here is a 430-residue protein sequence, read N- to C-terminus: Tapasin (430 aa).

An N-terminal signal peptide occupies residues 1 to 15 (MAAGLRLLLAGLCWS). Residues 16–399 (QFRVEDAASP…TEGPHLEDIT (384 aa)) are Lumenal-facing. Cysteine 34 and cysteine 99 are disulfide-bonded. The disordered stretch occupies residues 61-128 (GDAETPPEPG…PDARSPPTAG (68 aa)). An N-linked (GlcNAc...) asparagine glycan is attached at asparagine 78. Positions 101–111 (LNPTNPQTGSD) are enriched in polar residues. Ig-like C1-type domains follow at residues 139–273 (PQYG…LQLH) and 278–382 (PKVT…MRVS). Cysteines 299 and 368 form a disulfide. Residues 316-342 (RAGGSGTSQSPRDTVMDSWTSGHRQAA) form a disordered region. Polar residues predominate over residues 322 to 338 (TSQSPRDTVMDSWTSGH). Residues 400-417 (GLFLVAFVLCGLIRWLYP) traverse the membrane as a helical segment. At 418–430 (KAARPKEETKKSQ) the chain is on the cytoplasmic side.

Interacts with TAP1 and is thus a subunit of the TAP complex. Interaction with TAP1 is TAP2 independent and is required for efficient peptide-TAP interaction. Obligatory mediator for the interaction between newly assembled MHC class I molecules, calreticulin, ERp57 and TAP. Up to 4 MHC class I/tapasin complexes bind to 1 TAP.

It is found in the endoplasmic reticulum membrane. In terms of biological role, involved in the association of MHC class I with transporter associated with antigen processing (TAP) and in the assembly of MHC class I with peptide (peptide loading). This chain is Tapasin (TAPBP), found in Gallus gallus (Chicken).